The sequence spans 1077 residues: Receptor-type guanylate cyclase daf-11 (1077 aa).

Asparagine 14, asparagine 112, asparagine 149, and asparagine 311 each carry an N-linked (GlcNAc...) asparagine glycan. Residues 335–355 (TGVIIAIAVIMGVLLMFIIIL) traverse the membrane as a helical segment. A Protein kinase domain is found at 355–695 (LTTIRKCCNG…LARKIIDTVL (341 aa)). Residues 356–1077 (TTIRKCCNGS…DSQASTIPDN (722 aa)) lie on the Cytoplasmic side of the membrane. The region spanning 765-895 (TILYSDIVGF…EAVILASKME (131 aa)) is the Guanylate cyclase domain. Positions 770, 771, and 814 each coordinate Mg(2+). Residues 983-1034 (KDKMTLAKEKVIAERKNEEERLQRQQTLQEALEEHEEEIEMNEVLVDEDEGE) are a coiled coil. The segment at 1048–1077 (TQMEELEDEPAGRTIGHGRLDSQASTIPDN) is disordered.

This sequence belongs to the adenylyl cyclase class-4/guanylyl cyclase family. Expressed in sensory neurons including ASI, ASJ, ASK, AWB and AWC. Expressed in ASJ neurons in the dauer stage.

It localises to the cell membrane. The protein resides in the cell projection. The protein localises to the dendrite. Its subcellular location is the cilium. It is found in the perikaryon. The catalysed reaction is GTP = 3',5'-cyclic GMP + diphosphate. Its function is as follows. Guanylate cyclase involved in the production of the second messenger cGMP. In addition, regulates cGMP levels by controlling the transcription of 3',5'-cyclic phosphodiesterase pde-1 and pde-5 mRNAs. Involved in the olfactory, light and pheromone sensing pathways. Part of the chemosensory mechanism of the ASJ sensory neuron that controls dauer formation and dauer recovery. Promotes the calcium flux in ASJ sensory neurons in response to onset and removal of a nitric oxide (NO) stimulus and is thereby required for the behavioral avoidance response to NO-producing organisms like P.aeruginosa. In ASI and ASJ sensory neurons, controls dauer formation and behavioral response to P.aeruginosa by up-regulating the transcription of daf-7, a member of the TGF-beta family. Required for the chemotaxis responses to non-volatile and volatile attractants mediated by the sensory neurons ASE and AWC respectively. Required in ASJ neurons for phototransduction downstream of G protein coupled-photoreceptor lite-1. Plays a role in the development of ASJ sensory neuron axons during late larval stages and in the maintenance of normal axon morphology in adults. Required to maintain the expression of putative olfactory receptor str-2 in one of the two AWC neurons in adults. Regulates, via the production of cGMP, lifespan (in some environmental conditions), sensitivity to oxidative stress and entry into quiescence triggered by satiety. In AWB and AWC sensory neurons, mediates the recognition of food odors which subsequently allows for the detection of preferred food sources. This chain is Receptor-type guanylate cyclase daf-11, found in Caenorhabditis elegans.